Here is a 49-residue protein sequence, read N- to C-terminus: uncharacterized protein (49 aa).

This is an uncharacterized protein from Enterobacteria phage T4 (Bacteriophage T4).